A 1843-amino-acid chain; its full sequence is Nonribosomal peptide synthetase SIDD (1843 aa).

The interval 1-83 (MLSIDDHGGG…QQQQQQQQRS (83 aa)) is disordered. The segment covering 65–81 (QQQQQQQQQQQQQQQQQ) has biased composition (low complexity). Residues 133–528 (TYSELEHLST…TEVEHHIQTC (396 aa)) are adenylation 1. Residues 628–647 (KLGATHADEGPQEEPETDAE) are disordered. One can recognise a Carrier 1 domain in the interval 641–716 (EPETDAEKKL…AMANKSTSIS (76 aa)). An O-(pantetheine 4'-phosphoryl)serine modification is found at serine 677. A condensation 1 region spans residues 753-1175 (VEDVYPCTPL…ALSDDDAAAL (423 aa)). The 77-residue stretch at 1289–1365 (SATSQRQRRL…EMAAVMECTD (77 aa)) folds into the Carrier 2 domain. At serine 1326 the chain carries O-(pantetheine 4'-phosphoryl)serine. Positions 1447–1734 (FFDGPVDLRR…LREIAENCGL (288 aa)) are condensation 2.

Belongs to the NRP synthetase family. The cofactor is pantetheine 4'-phosphate.

It functions in the pathway siderophore biosynthesis. In terms of biological role, nonribosomal peptide synthetase; part of the gene cluster that mediates the biosynthesis of at least 11 siderophores, including beauverichelin A, dimerumic acid (DA), Na-dimethyl coprogen (NADC), eleutherazine B, ferricrocin (FC), fusarinine A, fusarinine C (FsC), metachelin A, mevalonolactone, rhodotorulic acid (RA) and tenellin. This cocktail of siderophores for iron metabolism is essential for virulence, and more specifically for the fungal virulence in penetrating through the host cuticle. Siderophore synthesis is also involved in conidial germination under iron-deficient conditions. SIDC catalyzes the assembly of ferricrocin whereas SIDD catalyzes the assembly of fusarinine C. This is Nonribosomal peptide synthetase SIDD from Beauveria bassiana (strain ARSEF 2860) (White muscardine disease fungus).